The sequence spans 406 residues: Arginine deiminase (406 aa).

The active-site Amidino-cysteine intermediate is Cys-396.

Belongs to the arginine deiminase family.

Its subcellular location is the cytoplasm. The enzyme catalyses L-arginine + H2O = L-citrulline + NH4(+). The protein operates within amino-acid degradation; L-arginine degradation via ADI pathway; carbamoyl phosphate from L-arginine: step 1/2. This chain is Arginine deiminase, found in Aliivibrio fischeri (strain ATCC 700601 / ES114) (Vibrio fischeri).